Reading from the N-terminus, the 195-residue chain is 2-cysteine peroxiredoxin, chloroplastic (195 aa).

The Thioredoxin domain occupies 3 to 161 (IRVGQKAPDF…ALRTLQAIQY (159 aa)). Cys-49 functions as the Cysteine sulfenic acid (-SOH) intermediate in the catalytic mechanism.

Belongs to the peroxiredoxin family. AhpC/Prx1 subfamily. As to quaternary structure, homodimer; disulfide-linked, upon oxidation.

It localises to the plastid. The protein localises to the chloroplast. The catalysed reaction is a hydroperoxide + [thioredoxin]-dithiol = an alcohol + [thioredoxin]-disulfide + H2O. Its function is as follows. Thiol-specific peroxidase that catalyzes the reduction of hydrogen peroxide and organic hydroperoxides to water and alcohols, respectively. Plays a role in cell protection against oxidative stress by detoxifying peroxides. The polypeptide is 2-cysteine peroxiredoxin, chloroplastic (Chattonella marina var. antiqua (Red tide flagellate)).